The sequence spans 144 residues: Endoribonuclease YbeY (144 aa).

Residues histidine 104, histidine 108, and histidine 114 each contribute to the Zn(2+) site.

It belongs to the endoribonuclease YbeY family. The cofactor is Zn(2+).

It is found in the cytoplasm. Functionally, single strand-specific metallo-endoribonuclease involved in late-stage 70S ribosome quality control and in maturation of the 3' terminus of the 16S rRNA. The polypeptide is Endoribonuclease YbeY (Nitratiruptor sp. (strain SB155-2)).